Consider the following 501-residue polypeptide: Solute carrier family 2, facilitated glucose transporter member 5 (501 aa).

Met1 carries the post-translational modification N-acetylmethionine. Over 1 to 18 (MEQQDQSMKEGRLTLVLA) the chain is Cytoplasmic. A helical membrane pass occupies residues 19-39 (LATLIAAFGSSFQYGYNVAAV). Tyr32 is a D-fructose binding site. At 40 to 68 (NSPALLMQQFYNETYYGRTGEFMEDFPLT) the chain is on the extracellular side. N-linked (GlcNAc...) asparagine glycosylation occurs at Asn51. Residues 69–91 (LLWSVTVSMFPFGGFIGSLLVGP) form a helical membrane-spanning segment. At 92–98 (LVNKFGR) the chain is on the cytoplasmic side. The helical transmembrane segment at 99-119 (KGALLFNNIFSIVPAILMGCS) threads the bilayer. The Extracellular portion of the chain corresponds to 120 to 126 (RVATSFE). The chain crosses the membrane as a helical span at residues 127–149 (LIIISRLLVGICAGVSSNVVPMY). The Cytoplasmic segment spans residues 150–161 (LGELAPKNLRGA). The chain crosses the membrane as a helical span at residues 162–182 (LGVVPQLFITVGILVAQIFGL). Residue Gln167 coordinates D-fructose. At 183-192 (RNLLANVDGW) the chain is on the extracellular side. Residues 193-213 (PILLGLTGVPAALQLLLLPFF) traverse the membrane as a helical segment. At 214–277 (PESPRYLLIQ…LFRMRSLRWQ (64 aa)) the chain is on the cytoplasmic side. Residues 278 to 298 (LLSIIVLMGGQQLSGVNAIYY) traverse the membrane as a helical segment. D-fructose is bound by residues Gln288 and 296–298 (IYY). Residues 299 to 313 (YADQIYLSAGVPEEH) lie on the Extracellular side of the membrane. Residues 314–334 (VQYVTAGTGAVNVVMTFCAVF) traverse the membrane as a helical segment. At 335–342 (VVELLGRR) the chain is on the cytoplasmic side. Residues 343–363 (LLLLLGFSICLIACCVLTAAL) traverse the membrane as a helical segment. The Extracellular segment spans residues 364 to 371 (ALQDTVSW). A helical transmembrane segment spans residues 372–394 (MPYISIVCVISYVIGHALGPSPI). His387 is a D-fructose binding site. Residues 395-412 (PALLITEIFLQSSRPSAF) are Cytoplasmic-facing. The chain crosses the membrane as a helical span at residues 413 to 433 (MVGGSVHWLSNFTVGLIFPFI). 419–420 (HW) lines the D-fructose pocket. Over 434-439 (QEGLGP) the chain is Extracellular. Residues 440–460 (YSFIVFAVICLLTTIYIFLIV) traverse the membrane as a helical segment. At 461–501 (PETKAKTFIEINQIFTKMNKVSEVYPEKEELKELPPVTSEQ) the chain is on the cytoplasmic side.

Detected in skeletal muscle, and in jejunum brush border membrane and basolateral membrane (at protein level). Expressed in small intestine, and at much lower levels in kidney, skeletal muscle, and adipose tissue.

Its subcellular location is the apical cell membrane. It is found in the cell membrane. The protein resides in the sarcolemma. It carries out the reaction D-fructose(out) = D-fructose(in). Its activity is regulated as follows. The uptake of 2-deoxyglucose is inhibited by cytochalasin B. Fructose transport is inhibited by the flavonoids epigallocatechin gallate and apigenin but not quercetin. Its function is as follows. Functions as a fructose transporter that has only low activity with other monosaccharides. Can mediate the uptake of 2-deoxyglucose, but with low efficiency. Essential for fructose uptake in the small intestine. Plays a role in the regulation of salt uptake and blood pressure in response to dietary fructose. Required for the development of high blood pressure in response to high dietary fructose intake. The chain is Solute carrier family 2, facilitated glucose transporter member 5 from Homo sapiens (Human).